The sequence spans 306 residues: Ribonuclease Z (306 aa).

Zn(2+)-binding residues include H63, H65, D67, H68, H140, D211, and H269. D67 serves as the catalytic Proton acceptor.

It belongs to the RNase Z family. As to quaternary structure, homodimer. Requires Zn(2+) as cofactor.

The catalysed reaction is Endonucleolytic cleavage of RNA, removing extra 3' nucleotides from tRNA precursor, generating 3' termini of tRNAs. A 3'-hydroxy group is left at the tRNA terminus and a 5'-phosphoryl group is left at the trailer molecule.. In terms of biological role, zinc phosphodiesterase, which displays some tRNA 3'-processing endonuclease activity. Probably involved in tRNA maturation, by removing a 3'-trailer from precursor tRNA. The chain is Ribonuclease Z from Listeria monocytogenes serovar 1/2a (strain ATCC BAA-679 / EGD-e).